An 810-amino-acid chain; its full sequence is Fibroblast growth factor receptor 1-A (810 aa).

A signal peptide spans 1-26 (MKMMMIMKTTLLLISVLLTQALQSQG). The Extracellular segment spans residues 27 to 363 (RPAIQDEAPA…TQLPNQTYLE (337 aa)). Ig-like C2-type domains follow at residues 28–115 (PAIQ…FNIS), 147–235 (PDKM…YQLD), and 244–346 (PILQ…AWLT). Cys53 and Cys99 form a disulfide bridge. 9 N-linked (GlcNAc...) asparagine glycosylation sites follow: Asn107, Asn113, Asn216, Asn229, Asn253, Asn285, Asn306, Asn319, and Asn358. An intrachain disulfide couples Cys167 to Cys219. The cysteines at positions 266 and 330 are disulfide-linked. A helical membrane pass occupies residues 364–384 (VLIYCVGFFLICVMVGTAVLA). Topologically, residues 385 to 810 (KMHSSAKKSD…PNRGVAFKKR (426 aa)) are cytoplasmic. A Phosphotyrosine; by autocatalysis modification is found at Tyr450. The region spanning 465-754 (LVLGKPLGEG…LSMTSNQEYL (290 aa)) is the Protein kinase domain. ATP contacts are provided by residues 471-477 (LGEGCFG), Lys501, 549-551 (EFA), and Asn555. 2 positions are modified to phosphotyrosine; by autocatalysis: Tyr570 and Tyr572. The active-site Proton acceptor is Asp610. Arg614 and Asp628 together coordinate ATP. Phosphotyrosine; by autocatalysis is present on residues Tyr640, Tyr641, Tyr717, and Tyr753. A disordered region spans residues 787-810 (AGADEPCLPKFPPHPNRGVAFKKR).

The protein belongs to the protein kinase superfamily. Tyr protein kinase family. Fibroblast growth factor receptor subfamily. Monomer. Homodimer after ligand binding. Interacts with cnpy1. In terms of processing, autophosphorylated. Binding of FGF family members together with heparan sulfate proteoglycan or heparin promotes receptor dimerization and autophosphorylation on tyrosine residues. Autophosphorylation occurs in trans between the two FGFR molecules present in the dimer and proceeds in a highly ordered manner. Phosphotyrosine residues provide docking sites for interacting proteins and so are crucial for FGFR1 function and its regulation. Post-translationally, ubiquitinated. FGFR1 is rapidly ubiquitinated after autophosphorylation, leading to internalization and degradation. N-glycosylated in the endoplasmic reticulum. The N-glycan chains undergo further maturation to an Endo H-resistant form in the Golgi apparatus. In terms of tissue distribution, initially expressed in adaxial mesoderm with transcripts distinctly localized to the anterior portion of each half-somite. Hereupon, also strongly expressed in the otic vesicles, branchial arches and the brain, especially at the midbrain-hindbrain boundary (MHB).

Its subcellular location is the cell membrane. The protein resides in the nucleus. It localises to the cytoplasm. It is found in the cytosol. The protein localises to the cytoplasmic vesicle. The enzyme catalyses L-tyrosyl-[protein] + ATP = O-phospho-L-tyrosyl-[protein] + ADP + H(+). Its activity is regulated as follows. Present in an inactive conformation in the absence of bound ligand. Ligand binding leads to dimerization and activation by sequential autophosphorylation on tyrosine residues. Tyrosine-protein kinase that acts as a cell-surface receptor for fibroblast growth factors and plays an essential role in the regulation of embryonic development, cell proliferation, differentiation and migration. Required for normal mesoderm patterning and normal skeletogenesis. Phosphorylates PLCG1, FRS2, GAB1 and SHB. Ligand binding leads to the activation of several signaling cascades. Activation of PLCG1 leads to the production of the cellular signaling molecules diacylglycerol and inositol-1,4,5-trisphosphate. Phosphorylation of FRS2 triggers recruitment of GRB2, GAB1, PIK3R1 and SOS1, and mediates activation of RAS, MAPK1/ERK2, MAPK3/ERK1 and the MAP kinase signaling pathway, as well as of the AKT1 signaling pathway. Promotes phosphorylation of SHC1, STAT1 and PTPN11/SHP2. In the nucleus, enhances RPS6KA1 and CREB1 activity and contributes to the regulation of transcription. FGFR1 signaling is down-regulated by ubiquitination, internalization and degradation. This Danio rerio (Zebrafish) protein is Fibroblast growth factor receptor 1-A (fgfr1a).